A 333-amino-acid polypeptide reads, in one-letter code: Sodium/bile acid cotransporter 7 (333 aa).

At 1–10 (MGLLERLRKE) the chain is on the cytoplasmic side. A helical membrane pass occupies residues 11–31 (WFIAGIALVIAAARLEPAVGV). At 32–37 (KGGPLK) the chain is on the extracellular side. The chain crosses the membrane as a helical span at residues 38-58 (PEITITYIAVSAIFFNSGLSL). Topologically, residues 59 to 71 (KTEELTSALMHVK) are cytoplasmic. A helical membrane pass occupies residues 72–92 (LHLFVQIFTLVFFPTAIWLFL). The Extracellular segment spans residues 93 to 103 (QLLSITPINEW). A helical transmembrane segment spans residues 104-124 (LLKGLQTVGCMPPPVSSAVIL). At 125–126 (TK) the chain is on the cytoplasmic side. A helical transmembrane segment spans residues 127-147 (AVGGNEAAAIFNSAFGSFLLG). At 148-151 (SSSS) the chain is on the extracellular side. The helical transmembrane segment at 152-172 (VPFTSIFSQLFMTVVVPLIIG) threads the bilayer. Over 173 to 189 (QIVRRYIKDWLERRKPP) the chain is Cytoplasmic. A helical transmembrane segment spans residues 190–210 (FGTISSCVLLMIIYTTFCDTF). The Extracellular portion of the chain corresponds to 211-222 (ANPNIDLDKFSL). Residues 223 to 243 (IIIVFIIFSVQMSFMFLTFLF) form a helical membrane-spanning segment. The Cytoplasmic portion of the chain corresponds to 244–258 (STRSNSGFTPADTVA). A helical transmembrane segment spans residues 259–279 (IIFCSTHKSLTLGIPMLKIVF). Residues 280 to 286 (AGYEHLS) lie on the Extracellular side of the membrane. The helical transmembrane segment at 287–307 (LISVPLLIYHPAQILLGSLLV) threads the bilayer. Over 308 to 333 (PTIKSWMVSRQKALKLTRQPKVPVKV) the chain is Cytoplasmic.

The protein belongs to the bile acid:sodium symporter (BASS) (TC 2.A.28) family.

Its subcellular location is the cell membrane. The protein resides in the endoplasmic reticulum membrane. It is found in the golgi apparatus membrane. Involved in teeth and skeletal development. Has an essential role in the biosynthesis and trafficking of glycosaminoglycans and glycoproteins to produce a proper functioning extracellular matrix. Required for extracellular matrix mineralization. Also involved in the regulation of cellular calcium homeostasis. Does not show transport activity towards bile acids or steroid sulfates. In Gallus gallus (Chicken), this protein is Sodium/bile acid cotransporter 7 (SLC10A7).